Here is a 239-residue protein sequence, read N- to C-terminus: Ribosomal RNA small subunit methyltransferase G (239 aa).

Residues Gly-77, Phe-82, 128-129 (AE), and Arg-146 contribute to the S-adenosyl-L-methionine site. Positions 217–239 (RRQTSKKYPRKPGTPNKSPLVES) are disordered.

The protein belongs to the methyltransferase superfamily. RNA methyltransferase RsmG family.

The protein resides in the cytoplasm. Specifically methylates the N7 position of guanine in position 535 of 16S rRNA. This is Ribosomal RNA small subunit methyltransferase G from Staphylococcus epidermidis (strain ATCC 12228 / FDA PCI 1200).